Here is a 177-residue protein sequence, read N- to C-terminus: ATP synthase subunit delta (177 aa).

This sequence belongs to the ATPase delta chain family. F-type ATPases have 2 components, F(1) - the catalytic core - and F(0) - the membrane proton channel. F(1) has five subunits: alpha(3), beta(3), gamma(1), delta(1), epsilon(1). F(0) has three main subunits: a(1), b(2) and c(10-14). The alpha and beta chains form an alternating ring which encloses part of the gamma chain. F(1) is attached to F(0) by a central stalk formed by the gamma and epsilon chains, while a peripheral stalk is formed by the delta and b chains.

Its subcellular location is the cell inner membrane. In terms of biological role, f(1)F(0) ATP synthase produces ATP from ADP in the presence of a proton or sodium gradient. F-type ATPases consist of two structural domains, F(1) containing the extramembraneous catalytic core and F(0) containing the membrane proton channel, linked together by a central stalk and a peripheral stalk. During catalysis, ATP synthesis in the catalytic domain of F(1) is coupled via a rotary mechanism of the central stalk subunits to proton translocation. This protein is part of the stalk that links CF(0) to CF(1). It either transmits conformational changes from CF(0) to CF(1) or is implicated in proton conduction. The sequence is that of ATP synthase subunit delta from Klebsiella pneumoniae (strain 342).